Reading from the N-terminus, the 67-residue chain is Conotoxin VnMMSK-02 (67 aa).

Positions 1-20 (MMSKLGALLTICLLLFPLTA) are cleaved as a signal peptide. A propeptide spanning residues 21 to 52 (LPLDGDQPADRPAERMQDDISSEQHPLFDKER) is cleaved from the precursor. Gln-53 is subject to Pyrrolidone carboxylic acid. Intrachain disulfides connect Cys-54–Cys-66, Cys-55–Cys-62, and Cys-59–Cys-65. Pro-64 is modified (4-hydroxyproline). Cys-66 bears the Cysteine amide mark.

The protein belongs to the conotoxin M superfamily. Expressed by the venom duct.

Its subcellular location is the secreted. In Conus ventricosus (Mediterranean cone), this protein is Conotoxin VnMMSK-02.